The following is a 530-amino-acid chain: MASNYDKLTSSRVAIIGAGVSGLAAAKNLVHHNPTVFEASDSVGGVWRSCTYETTKLQSARVDYEFSDFPWPNNRDDTTFPPYLEILDYLESYAKHFDLLKFMKFGSKVIEVRFIGDGETPQMVDLGAYGNLLPGKPVWEVAVQIGDSGDIQWHAFEFVVVCTGKYGDVPRIPAFPAKKGPEMFQGKVMHSMDYCKLEKEEASTLLSGKKVAVIGFKKSAIDLALESALANQGEGGKACTMVVRTTHWGIPHYWVWGLPFFLFYSSRASQFLHDRPNQSFLRTLFCLLFSLLRAVVSKFIESYVLWKLPLEKYGLKPNHSFEEDYASCQMAIIPENFFEEADKGMIRFKKSSKWWFYEEGIVFEDGTTLEADVVILATGYDGKKKLKAIVPEPFRTWLEFPSGVMPLYRGTIHPLIPNMGFVGYVQSSSNLHTSELRSMWLSRLVDEKFRLPSKEKMLDQFLKEMEVTRNSSRFYKRHCISTFSIQHADDMCNDMGLNPWRKSNFLLEAFSPYGSQDYRLGQEEKEDMTA.

FAD contacts are provided by residues 17–21 (GAGVS), E38, 46–47 (VW), and 58–59 (QS). 219-222 (SAID) provides a ligand contact to NADP(+).

Belongs to the FMO family. FAD serves as cofactor.

Functionally, required for the establishment of systemic acquired resistance (SAR). Not involved in local defense mechanisms. Confers a salicylic acid-dependent (SA) resistance to virulent pathogens such as P.syringae pv tomato and H.parasitica. The protein is Probable flavin-containing monooxygenase 1 (FMO1) of Arabidopsis thaliana (Mouse-ear cress).